The chain runs to 440 residues: Tubulin beta-3 chain (440 aa).

GTP-binding residues include Gln-2, Glu-60, Ser-129, Gly-133, Thr-134, Gly-135, Asn-195, and Asn-217. Glu-60 provides a ligand contact to Mg(2+). The disordered stretch occupies residues 411-440 (SEYQQYQDATADEEGEYEDEEEEEPEHGYE). Acidic residues predominate over residues 420 to 440 (TADEEGEYEDEEEEEPEHGYE).

Belongs to the tubulin family. Dimer of alpha and beta chains. A typical microtubule is a hollow water-filled tube with an outer diameter of 25 nm and an inner diameter of 15 nM. Alpha-beta heterodimers associate head-to-tail to form protofilaments running lengthwise along the microtubule wall with the beta-tubulin subunit facing the microtubule plus end conferring a structural polarity. Microtubules usually have 13 protofilaments but different protofilament numbers can be found in some organisms and specialized cells. The cofactor is Mg(2+).

The protein resides in the cytoplasm. The protein localises to the cytoskeleton. In terms of biological role, tubulin is the major constituent of microtubules, a cylinder consisting of laterally associated linear protofilaments composed of alpha- and beta-tubulin heterodimers. Microtubules grow by the addition of GTP-tubulin dimers to the microtubule end, where a stabilizing cap forms. Below the cap, tubulin dimers are in GDP-bound state, owing to GTPase activity of alpha-tubulin. The polypeptide is Tubulin beta-3 chain (TUBB3) (Pisum sativum (Garden pea)).